The primary structure comprises 218 residues: Thiopurine S-methyltransferase (218 aa).

The S-adenosyl-L-methionine site is built by Trp-10, Leu-45, Glu-66, and Arg-123.

It belongs to the class I-like SAM-binding methyltransferase superfamily. TPMT family.

Its subcellular location is the cytoplasm. It catalyses the reaction S-adenosyl-L-methionine + a thiopurine = S-adenosyl-L-homocysteine + a thiopurine S-methylether.. This chain is Thiopurine S-methyltransferase, found in Shewanella baltica (strain OS155 / ATCC BAA-1091).